The following is a 62-amino-acid chain: Defensin-like protein A (62 aa).

Residues M1 to A26 form the signal peptide. Residues C42 and C52 are joined by a disulfide bond.

The protein belongs to the DEFL family.

The protein localises to the secreted. Functionally, truncated and inactivated form of SCRA, a protein involved in male-mediated self-incompatibility when active. Most A.thaliana cultivars contain such an inactive form and thus, are self-fertiles. This is Defensin-like protein A (SCRA) from Arabidopsis thaliana (Mouse-ear cress).